We begin with the raw amino-acid sequence, 361 residues long: [LysW]-lysine hydrolase (361 aa).

A Zn(2+)-binding site is contributed by His67. Residue Asp69 is part of the active site. Asp91 lines the Zn(2+) pocket. Residue Glu124 is the Proton acceptor of the active site. Zn(2+)-binding residues include Glu125, Glu148, and His326.

This sequence belongs to the peptidase M20A family. LysK subfamily. Zn(2+) serves as cofactor. The cofactor is Co(2+).

The protein resides in the cytoplasm. It catalyses the reaction [amino-group carrier protein]-C-terminal-gamma-(L-lysyl)-L-glutamate + H2O = [amino-group carrier protein]-C-terminal-L-glutamate + L-lysine. It participates in amino-acid biosynthesis; L-lysine biosynthesis via AAA pathway; L-lysine from L-alpha-aminoadipate (Thermus route): step 5/5. Functionally, catalyzes the release of L-lysine from [LysW]-gamma-L-lysine. The protein is [LysW]-lysine hydrolase of Thermus thermophilus (strain ATCC 27634 / DSM 579 / HB8).